The primary structure comprises 423 residues: Serine hydroxymethyltransferase (423 aa).

Residues Leu120 and 124–126 (GHL) each bind (6S)-5,6,7,8-tetrahydrofolate. Lys229 is subject to N6-(pyridoxal phosphate)lysine. Residues Glu245 and 353–355 (SPF) each bind (6S)-5,6,7,8-tetrahydrofolate.

This sequence belongs to the SHMT family. In terms of assembly, homodimer. Requires pyridoxal 5'-phosphate as cofactor.

It localises to the cytoplasm. It carries out the reaction (6R)-5,10-methylene-5,6,7,8-tetrahydrofolate + glycine + H2O = (6S)-5,6,7,8-tetrahydrofolate + L-serine. The protein operates within one-carbon metabolism; tetrahydrofolate interconversion. It participates in amino-acid biosynthesis; glycine biosynthesis; glycine from L-serine: step 1/1. Functionally, catalyzes the reversible interconversion of serine and glycine with tetrahydrofolate (THF) serving as the one-carbon carrier. This reaction serves as the major source of one-carbon groups required for the biosynthesis of purines, thymidylate, methionine, and other important biomolecules. Also exhibits THF-independent aldolase activity toward beta-hydroxyamino acids, producing glycine and aldehydes, via a retro-aldol mechanism. This is Serine hydroxymethyltransferase from Prochlorococcus marinus (strain MIT 9312).